Consider the following 160-residue polypeptide: MQPTSPAAPHRRLYTEEQRARRDATRWTLVQGILAPLQFLVFAISLGLVLWYLATGEGYAAATASILIKTFLLYTIMVTGAIWEKVVFGQYLFAPAFFWEDVFSFGVIALHTAYLWALFTGQPHGLQMGIALAAYATYVINAGQFLWKLRMARLDMEAAQ.

It functions in the pathway porphyrin-containing compound metabolism; bacteriochlorophyll biosynthesis (light-independent). This is 2-vinyl bacteriochlorophyllide hydratase (bchF) from Cereibacter sphaeroides (strain ATCC 17023 / DSM 158 / JCM 6121 / CCUG 31486 / LMG 2827 / NBRC 12203 / NCIMB 8253 / ATH 2.4.1.) (Rhodobacter sphaeroides).